Here is a 438-residue protein sequence, read N- to C-terminus: MNEINKIWQKILEIILEKVGESTFELWFSPIKLLDIKNSEAFIEVPNRFFKDWIEDNFPSIISDSFYQITGSQVEVKYIITGKEHETGLIEEKKQVIKKGNLNPKYTFDTFVVGPSNQFAHAASFRVAENPGFAYNPLFIYGGVGLGKTHLITAIGNYILDKKPEMNVCYISSEQFTGEFVSAIRHEKMPEFRNKYRTVDVFLVDDIQFIAGKDSTQEEFFHTFNELYSKQKQIVISSDRPPMEISDITDRLRSRFGMGLIADIQPPEIETRLAILYKKADMEGVKLPEDVAYFIASRVKSNVRELEGSLIKLCAYTSLTKVPISMDVAKYVLRDLLPDENKPITIELIQKAVCEAVGLKIQDIKSKKRTKEISNARKLAMYITKKLTNLSLAEIGNAFGGKDHATVIYACKQVEKEKEKDESISRLIDSIIKKVTGQ.

A domain I, interacts with DnaA modulators region spans residues 1 to 74 (MNEINKIWQK…SFYQITGSQV (74 aa)). The tract at residues 74-100 (VEVKYIITGKEHETGLIEEKKQVIKKG) is domain II. The interval 101–317 (NLNPKYTFDT…GSLIKLCAYT (217 aa)) is domain III, AAA+ region. ATP-binding residues include Gly145, Gly147, Lys148, and Thr149. The tract at residues 318-438 (SLTKVPISMD…DSIIKKVTGQ (121 aa)) is domain IV, binds dsDNA.

Belongs to the DnaA family. As to quaternary structure, oligomerizes as a right-handed, spiral filament on DNA at oriC.

It localises to the cytoplasm. In terms of biological role, plays an essential role in the initiation and regulation of chromosomal replication. ATP-DnaA binds to the origin of replication (oriC) to initiate formation of the DNA replication initiation complex once per cell cycle. Binds the DnaA box (a 9 base pair repeat at the origin) and separates the double-stranded (ds)DNA. Forms a right-handed helical filament on oriC DNA; dsDNA binds to the exterior of the filament while single-stranded (ss)DNA is stabiized in the filament's interior. The ATP-DnaA-oriC complex binds and stabilizes one strand of the AT-rich DNA unwinding element (DUE), permitting loading of DNA polymerase. After initiation quickly degrades to an ADP-DnaA complex that is not apt for DNA replication. Binds acidic phospholipids. The polypeptide is Chromosomal replication initiator protein DnaA (Thermodesulfovibrio yellowstonii (strain ATCC 51303 / DSM 11347 / YP87)).